A 285-amino-acid chain; its full sequence is Pantothenate synthetase (285 aa).

An ATP-binding site is contributed by 30 to 37 (MGFLHEGH). Histidine 37 (proton donor) is an active-site residue. Position 61 (glutamine 61) interacts with (R)-pantoate. Glutamine 61 provides a ligand contact to beta-alanine. ATP is bound at residue 147–150 (GQKD). Position 153 (glutamine 153) interacts with (R)-pantoate. Residues valine 176 and 184 to 187 (KSSR) contribute to the ATP site.

This sequence belongs to the pantothenate synthetase family. Homodimer.

It localises to the cytoplasm. It carries out the reaction (R)-pantoate + beta-alanine + ATP = (R)-pantothenate + AMP + diphosphate + H(+). The protein operates within cofactor biosynthesis; (R)-pantothenate biosynthesis; (R)-pantothenate from (R)-pantoate and beta-alanine: step 1/1. Functionally, catalyzes the condensation of pantoate with beta-alanine in an ATP-dependent reaction via a pantoyl-adenylate intermediate. The chain is Pantothenate synthetase from Listeria monocytogenes serotype 4b (strain F2365).